Here is a 680-residue protein sequence, read N- to C-terminus: Dihydroxyacetone phosphate acyltransferase (680 aa).

Serine 12 and serine 17 each carry phosphoserine. The short motif at 162 to 167 (HRSYID) is the HXXXXD motif element. Lysine 643 is subject to N6-acetyllysine. The Microbody targeting signal signature appears at 678–680 (AKL).

The protein belongs to the GPAT/DAPAT family. Part of a heterotrimeric complex composed of GNPAT, AGPS and a modified form of GNPAT.

It is found in the peroxisome membrane. It carries out the reaction dihydroxyacetone phosphate + an acyl-CoA = a 1-acylglycerone 3-phosphate + CoA. The enzyme catalyses dihydroxyacetone phosphate + hexadecanoyl-CoA = 1-hexadecanoylglycerone 3-phosphate + CoA. It participates in membrane lipid metabolism; glycerophospholipid metabolism. Dihydroxyacetonephosphate acyltransferase catalyzing the first step in the biosynthesis of plasmalogens, a subset of phospholipids that differ from other glycerolipids by having an alkyl chain attached through a vinyl ether linkage at the sn-1 position of the glycerol backbone, and which unique physical properties have an impact on various aspects of cell signaling and membrane biology. This Bos taurus (Bovine) protein is Dihydroxyacetone phosphate acyltransferase.